The chain runs to 612 residues: MALVCGAPLASRSCLNKSLISSTHELKPLRRTILPTLRWKSATPSINMCLTTSNSVDAVQRRIANHHSNLWDDDFIQSLSTPYEAPSYRERAERLIGEVKEMFESMGPNNDLLQRLSMVESVERLGIDRHFKNEIKSALDYVYSHWNEKGIGCGRDSVVSDLNSTALALRTLRLHGYPVSSDVLEHFKDQKGRFACSSIKTEGEIRSLLNLFRASLVAFPNEKVMEEAEIFSTTYLKEAVQKIPVSSLSRQIEYNMEYGWHTNLPRLEARNYMGDMIHVMPYMNAEKLLELAKLEFNIFHSLQERELKHLSRWWKDSGFSQLTFVRHRHVEYYTLASCIDIDPKHSAFRLGFAKMCHLITVLDDIYDTFGTMDELKLFTAAIKRWDPSATEWLPEYMKGVYMVVYETVNEMAGEAKKSQGRDTINYARQAWEAYIDSYMKEAEWISSGCLPTFEEYYENGKVSFGYQISVLQPILTLDVPLPHHILQEIIFPSRFNGLASGILRLKGDTRCYQADRARGEEASCISCYMNDNPGATEEDALNHIHAMVNELMKEFNWELLKPDNNVPVSSKKHAFDITRAVHHGYKYRDGYSVANNEIKNLVITTVLEPVPL.

Residues Met1–Thr52 constitute a chloroplast transit peptide. Mg(2+) contacts are provided by Asp363, Asp367, and Asp515. Positions Asp363–Asp367 match the DDXXD motif motif.

It belongs to the terpene synthase family. Tpsd subfamily. It depends on Mg(2+) as a cofactor. Mn(2+) serves as cofactor.

The protein resides in the plastid. It localises to the chloroplast. It catalyses the reaction (2E)-geranyl diphosphate + H2O = 1,8-cineole + diphosphate. The protein operates within terpene metabolism; oleoresin biosynthesis. Terpene synthase (TPS) involved in the biosynthesis of monoterpene natural products included in conifer oleoresin secretions and volatile emissions; these compounds contribute to biotic and abiotic stress defense against herbivores and pathogens. Catalyzes the conversion of (2E)-geranyl diphosphate (GPP) to 1,8-cineole. This Picea glauca (White spruce) protein is 1,8-cineole synthase, chloroplastic.